Reading from the N-terminus, the 87-residue chain is Putative regulatory protein GK1166 (87 aa).

This sequence belongs to the RemA family.

The protein is Putative regulatory protein GK1166 of Geobacillus kaustophilus (strain HTA426).